The following is a 1414-amino-acid chain: Calcium-transporting ATPase 2 (1414 aa).

2 disordered regions span residues 1–231 (MSRN…PSRL) and 265–294 (AVGTDEGNAENGAPRSSADMPGGNGPQWRA). At 1-327 (MSRNNPPPVI…LLMWLAFKDK (327 aa)) the chain is on the cytoplasmic side. 2 stretches are compositionally biased toward low complexity: residues 33–53 (PTPTLVIPGSPASESSHPESP) and 75–96 (SPTPSYSSALTPPSPTLTSSSS). Over residues 179 to 189 (DGDRGEDDANK) the composition is skewed to basic and acidic residues. Positions 190–201 (KGKKDKKGKKGK) are enriched in basic residues. Residues 202–229 (KDKEEPPSAHLDPDKDKTDPTPFREKPS) show a composition bias toward basic and acidic residues. A helical membrane pass occupies residues 328-348 (VLILLSVAAVVSLALGLYQDL). Topologically, residues 349–370 (GTPPKIIYNDECPDGCEEAQVD) are vacuolar. The helical transmembrane segment at 371–391 (WVEGVAIVVAIIIVVLVGSIN) threads the bilayer. Residues 392-541 (DWQKERQFKK…TPLQIKLNHL (150 aa)) are Cytoplasmic-facing. A helical transmembrane segment spans residues 542 to 562 (AELIAKLGGASGLLLFIALMI). Residues 563-585 (RFFVQLKTNPDRSANDKAQSFIQ) are Vacuolar-facing. A helical transmembrane segment spans residues 586–606 (ILIIAVTLVVVAVPEGLPLAV). Ca(2+) contacts are provided by valine 595 and glutamate 600. Over 607 to 1040 (TLALAFATKR…GRCVNDSVKK (434 aa)) the chain is Cytoplasmic. Aspartate 642 acts as the 4-aspartylphosphate intermediate in catalysis. Mg(2+) contacts are provided by aspartate 642 and threonine 644. ATP-binding positions include threonine 644, glutamate 737, arginine 779, 909–911 (TGD), arginine 958, and lysine 964. Residue aspartate 983 coordinates Mg(2+). Asparagine 986 lines the ATP pocket. Residues 1041 to 1061 (FLQFQISVNITAVFITFISAV) form a helical membrane-spanning segment. Residue asparagine 1049 coordinates Ca(2+). Over 1062–1068 (ASSSEES) the chain is Vacuolar. The chain crosses the membrane as a helical span at residues 1069–1089 (VLTAVQLLWVNLIMDTFAALA). Ca(2+)-binding residues include asparagine 1079 and aspartate 1083. Residues 1090–1118 (LATDPATESSLDRKPDRKNAPLITVEMFK) are Cytoplasmic-facing. A helical membrane pass occupies residues 1119–1139 (MIMVQAIYQIIVCLVLHFAGL). Over 1140-1153 (KILGLEDNDQNNTE) the chain is Vacuolar. A helical membrane pass occupies residues 1154 to 1171 (LGALVFNCFVFCQIFNQL). At 1172-1191 (NCRRLDRKLNVLEGFWRNWY) the chain is on the cytoplasmic side. A helical membrane pass occupies residues 1192–1212 (FIIIFLIMVGGQILIVEVGGA). Glutamate 1208 serves as a coordination point for Ca(2+). Over 1213–1223 (AFQVTRLGGRD) the chain is Vacuolar. A helical transmembrane segment spans residues 1224-1244 (WGITLVIGALSLPIGALVRLT). The Cytoplasmic portion of the chain corresponds to 1245 to 1414 (PTGPFARLLV…GLSSGDANNV (170 aa)). Positions 1376–1414 (PRTNPDDPLYAKFGLQPPESRGSSVSGAEGLSSGDANNV) are disordered.

The protein belongs to the cation transport ATPase (P-type) (TC 3.A.3) family.

The protein resides in the vacuole membrane. The catalysed reaction is Ca(2+)(in) + ATP + H2O = Ca(2+)(out) + ADP + phosphate + H(+). Its function is as follows. This magnesium-dependent enzyme catalyzes the hydrolysis of ATP coupled with the transport of calcium. Transports calcium to the vacuole and participates in the control of cytosolic free calcium. The chain is Calcium-transporting ATPase 2 from Cryptococcus neoformans var. grubii serotype A (strain H99 / ATCC 208821 / CBS 10515 / FGSC 9487) (Filobasidiella neoformans var. grubii).